Consider the following 327-residue polypeptide: Undecaprenyl-phosphate 4-deoxy-4-formamido-L-arabinose transferase (327 aa).

The next 2 membrane-spanning stretches (helical) occupy residues 233-253 (ILSLIGSVVALSGFLLALLLI) and 268-288 (VFTLFAVLFMFIGAQFVGMGL).

This sequence belongs to the glycosyltransferase 2 family.

The protein localises to the cell inner membrane. The catalysed reaction is UDP-4-deoxy-4-formamido-beta-L-arabinose + di-trans,octa-cis-undecaprenyl phosphate = 4-deoxy-4-formamido-alpha-L-arabinopyranosyl di-trans,octa-cis-undecaprenyl phosphate + UDP. It participates in glycolipid biosynthesis; 4-amino-4-deoxy-alpha-L-arabinose undecaprenyl phosphate biosynthesis; 4-amino-4-deoxy-alpha-L-arabinose undecaprenyl phosphate from UDP-4-deoxy-4-formamido-beta-L-arabinose and undecaprenyl phosphate: step 1/2. It functions in the pathway bacterial outer membrane biogenesis; lipopolysaccharide biosynthesis. Its function is as follows. Catalyzes the transfer of 4-deoxy-4-formamido-L-arabinose from UDP to undecaprenyl phosphate. The modified arabinose is attached to lipid A and is required for resistance to polymyxin and cationic antimicrobial peptides. This Pectobacterium carotovorum subsp. carotovorum (strain PC1) protein is Undecaprenyl-phosphate 4-deoxy-4-formamido-L-arabinose transferase.